A 334-amino-acid chain; its full sequence is Transcription initiation factor IIB (334 aa).

Residues 34–65 (EELVCPMCDSKNIIKDYEKAEIVCEDCGCVLQ) form a TFIIB-type zinc finger. Zn(2+)-binding residues include Cys-38, Cys-41, Cys-57, and Cys-60. A run of 2 repeats spans residues 151-234 (SELD…SREL) and 245-326 (DYVP…ELTE).

The protein belongs to the TFIIB family.

Stabilizes TBP binding to an archaeal box-A promoter. Also responsible for recruiting RNA polymerase II to the pre-initiation complex (DNA-TBP-TFIIB). The protein is Transcription initiation factor IIB of Methanococcus aeolicus (strain ATCC BAA-1280 / DSM 17508 / OCM 812 / Nankai-3).